Consider the following 408-residue polypeptide: Ribosomal RNA large subunit methyltransferase DR_0049 (408 aa).

The protein belongs to the methyltransferase superfamily.

The catalysed reaction is cytidine(2499) in 23S rRNA + S-adenosyl-L-methionine = 5-methylcytidine(2499) in 23S rRNA + S-adenosyl-L-homocysteine + H(+). Its function is as follows. Specifically methylates the cytosine at position 2499 (m5C2499) of 23S rRNA. The polypeptide is Ribosomal RNA large subunit methyltransferase DR_0049 (Deinococcus radiodurans (strain ATCC 13939 / DSM 20539 / JCM 16871 / CCUG 27074 / LMG 4051 / NBRC 15346 / NCIMB 9279 / VKM B-1422 / R1)).